Here is a 1131-residue protein sequence, read N- to C-terminus: Probable pre-mRNA-splicing factor ATP-dependent RNA helicase mog-1 (1131 aa).

6 stretches are compositionally biased toward basic and acidic residues: residues methionine 1–glycine 12, arginine 65–glycine 122, tryptophan 139–serine 148, arginine 160–arginine 173, arginine 180–glutamate 225, and glycine 407–alanine 416. Disordered stretches follow at residues methionine 1–glutamate 225 and methionine 389–alanine 416. Residues methionine 451 to isoleucine 614 enclose the Helicase ATP-binding domain. Glycine 464–threonine 471 provides a ligand contact to ATP. The short motif at aspartate 561–histidine 564 is the DEAH box element. Positions proline 629–glycine 812 constitute a Helicase C-terminal domain. Basic and acidic residues-rich tracts occupy residues glutamate 1085–valine 1114 and alanine 1121–leucine 1131. The disordered stretch occupies residues glutamate 1085–leucine 1131.

It belongs to the DEAD box helicase family. DEAH subfamily. PRP16 sub-subfamily.

It localises to the nucleus. It carries out the reaction ATP + H2O = ADP + phosphate + H(+). Functionally, probable ATP-binding RNA helicase involved in pre-mRNA splicing. This is Probable pre-mRNA-splicing factor ATP-dependent RNA helicase mog-1 (mog-1) from Caenorhabditis elegans.